A 148-amino-acid chain; its full sequence is Large ribosomal subunit protein uL15 (148 aa).

The tract at residues 1–47 (MTKLEDLRPTPGSVKPRKRVGRGIGSGHGKTSGRGHKGQKSRGSGKV) is disordered. Positions 31 to 45 (TSGRGHKGQKSRGSG) are enriched in basic residues.

The protein belongs to the universal ribosomal protein uL15 family. In terms of assembly, part of the 50S ribosomal subunit.

Its function is as follows. Binds to the 23S rRNA. The protein is Large ribosomal subunit protein uL15 of Pseudothermotoga lettingae (strain ATCC BAA-301 / DSM 14385 / NBRC 107922 / TMO) (Thermotoga lettingae).